A 126-amino-acid polypeptide reads, in one-letter code: 13 kDa ribonucleoprotein-associated protein (126 aa).

Belongs to the eukaryotic ribosomal protein eL8 family. Component of the U3 snoRNP particle. Binds to the C'/D and B/C motifs in U3 snoRNA. Component of the 25S U4/U6.U5 tri-snRNP particle, a subcomplex of the spliceosome. Binds to the 5' stem-loop of U4 snRNA.

The protein resides in the nucleus. The protein localises to the nucleolus. Its function is as follows. Common component of the spliceosome and rRNA processing machinery. In association with the spliceosomal U4/U6.U5 tri-snRNP particle, required for splicing of pre-mRNA. In association with box C/D snoRNPs, required for processing of pre-ribosomal RNA (rRNA) and site-specific 2'-O-methylation of substrate RNAs. Essential for the accumulation and stability of U4 snRNA, U6 snRNA, and box C/D snoRNAs. The chain is 13 kDa ribonucleoprotein-associated protein (SNU13) from Candida albicans (strain SC5314 / ATCC MYA-2876) (Yeast).